The chain runs to 572 residues: Alpha-1D adrenergic receptor (572 aa).

The interval 1–77 (MTFRDLLSVS…SAGEPGSAGA (77 aa)) is disordered. At 1–95 (MTFRDLLSVS…AVGGLVVSAQ (95 aa)) the chain is on the extracellular side. Gly residues-rich tracts occupy residues 23–33 (SSAGGGGGSAG) and 42–61 (AVGGVPGGAGGGGGVVGAGS). Residues Asn-65 and Asn-82 are each glycosylated (N-linked (GlcNAc...) asparagine). The chain crosses the membrane as a helical span at residues 96 to 121 (GVGVGVFLAAFILMAVAGNLLVILSV). The Cytoplasmic portion of the chain corresponds to 122 to 133 (ACNRHLQTVTNY). A helical transmembrane segment spans residues 134 to 159 (FIVNLAVADLLLSATVLPFSATMEVL). At 160–169 (GFWAFGRAFC) the chain is on the extracellular side. The chain crosses the membrane as a helical span at residues 170–192 (DVWAAVDVLCCTASILSLCTISV). The Cytoplasmic segment spans residues 193–213 (DRYVGVRHSLKYPAIMTERKA). The chain crosses the membrane as a helical span at residues 214–238 (AAILALLWVVALVVSVGPLLGWKEP). Over 239 to 251 (VPPDERFCGITEE) the chain is Extracellular. The helical transmembrane segment at 252-275 (AGYAVFSSVCSFYLPMAVIVVMYC) threads the bilayer. The Cytoplasmic segment spans residues 276-348 (RVYVVARSTT…KFSREKKAAK (73 aa)). Residues 349–373 (TLAIVVGVFVLCWFPFFFVLPLGSL) form a helical membrane-spanning segment. Residues 374 to 380 (FPQLKPS) are Extracellular-facing. A helical transmembrane segment spans residues 381–405 (EGVFKVIFWLGYFNSCVNPLIYPCS). At 406-572 (SREFKRAFLR…DYSNLRETDI (167 aa)) the chain is on the cytoplasmic side. Cys-419 carries the S-palmitoyl cysteine lipid modification. The segment at 444-488 (GLRQDCAPSSGDAPPGAPLALTALPDPDPEPPGTPEMQAPVASRR) is disordered. Positions 450-468 (APSSGDAPPGAPLALTALP) are enriched in low complexity.

Belongs to the G-protein coupled receptor 1 family. Adrenergic receptor subfamily. ADRA1D sub-subfamily. Interacts with FLNA (via filamin repeat 21); increases PKA-mediated phosphorylation of FLNA. Palmitoylated. Palmitoylation by ZDHHC21 may increase the expression of the receptor and regulate downstream signaling.

The protein resides in the cell membrane. In terms of biological role, this alpha-adrenergic receptor mediates its effect through the influx of extracellular calcium. The polypeptide is Alpha-1D adrenergic receptor (ADRA1D) (Homo sapiens (Human)).